The following is a 653-amino-acid chain: Polyadenylate-binding protein, cytoplasmic and nuclear (653 aa).

Over residues methionine 1–alanine 10 the composition is skewed to basic and acidic residues. Residues methionine 1–proline 77 form a disordered region. A compositionally biased stretch (polar residues) spans aspartate 17–serine 27. Over residues alanine 53–serine 68 the composition is skewed to low complexity. The 79-residue stretch at alanine 80 to arginine 158 folds into the RRM 1 domain. Threonine 167 is subject to Phosphothreonine. RRM domains are found at residues glycine 168–serine 245, threonine 261–lysine 338, and valine 364–arginine 441. The 78-residue stretch at proline 569–aspartate 646 folds into the PABC domain.

It belongs to the polyadenylate-binding protein type-1 family. In terms of assembly, interacts with cid13.

It localises to the cytoplasm. It is found in the nucleus. Binds the poly(A) tail of mRNA. Appears to be an important mediator of the multiple roles of the poly(A) tail in mRNA biogenesis, stability and translation. In the nucleus, involved in both mRNA cleavage and polyadenylation. Is also required for efficient mRNA export to the cytoplasm. Acts in concert with a poly(A)-specific nuclease (PAN) to affect poly(A) tail shortening, which may occur concomitantly with either nucleocytoplasmic mRNA transport or translational initiation. In the cytoplasm, stimulates translation initiation and regulates mRNA decay through translation termination-coupled poly(A) shortening, probably mediated by PAN. This chain is Polyadenylate-binding protein, cytoplasmic and nuclear (pab1), found in Schizosaccharomyces pombe (strain 972 / ATCC 24843) (Fission yeast).